Consider the following 469-residue polypeptide: 3-isopropylmalate dehydratase large subunit (469 aa).

Positions 350, 410, and 413 each coordinate [4Fe-4S] cluster.

The protein belongs to the aconitase/IPM isomerase family. LeuC type 1 subfamily. In terms of assembly, heterodimer of LeuC and LeuD. The cofactor is [4Fe-4S] cluster.

The catalysed reaction is (2R,3S)-3-isopropylmalate = (2S)-2-isopropylmalate. It functions in the pathway amino-acid biosynthesis; L-leucine biosynthesis; L-leucine from 3-methyl-2-oxobutanoate: step 2/4. Catalyzes the isomerization between 2-isopropylmalate and 3-isopropylmalate, via the formation of 2-isopropylmaleate. The sequence is that of 3-isopropylmalate dehydratase large subunit from Rhizobium meliloti (strain 1021) (Ensifer meliloti).